A 275-amino-acid chain; its full sequence is Large ribosomal subunit protein uL2 (275 aa).

2 disordered regions span residues 28-59 (KPFAPLLDSQSTTAGRNNNGHITTRHKGGGHK) and 224-275 (AMNP…RHKR). A compositionally biased stretch (polar residues) spans 35 to 49 (DSQSTTAGRNNNGHI). The span at 50 to 59 (TTRHKGGGHK) shows a compositional bias: basic residues.

Belongs to the universal ribosomal protein uL2 family. Part of the 50S ribosomal subunit. Forms a bridge to the 30S subunit in the 70S ribosome.

One of the primary rRNA binding proteins. Required for association of the 30S and 50S subunits to form the 70S ribosome, for tRNA binding and peptide bond formation. It has been suggested to have peptidyltransferase activity; this is somewhat controversial. Makes several contacts with the 16S rRNA in the 70S ribosome. This chain is Large ribosomal subunit protein uL2, found in Paraburkholderia xenovorans (strain LB400).